The sequence spans 363 residues: Actin-related protein 7 (363 aa).

Residue M1 is modified to N-acetylmethionine.

The protein belongs to the actin family. Plant ARP7 subfamily. Mostly expressed in flowers, and, to a lower extent, in roots, seedlings, leaves and siliques (at protein level).

It localises to the nucleus. It is found in the cytoplasm. Its function is as follows. Essential protein required during embryogenesis and all plant development stages, probably through a chromatin-mediated regulation of gene expression. The polypeptide is Actin-related protein 7 (ARP7) (Arabidopsis thaliana (Mouse-ear cress)).